A 370-amino-acid polypeptide reads, in one-letter code: Chaperone protein DnaJ (370 aa).

One can recognise a J domain in the interval 4 to 68 (DYYQVLGVSK…QKRAAYDRFG (65 aa)). Residues 133–211 (GIEKNISFSS…CHGMGRYHKQ (79 aa)) form a CR-type zinc finger. The Zn(2+) site is built by Cys146, Cys149, Cys163, Cys166, Cys185, Cys188, Cys199, and Cys202. CXXCXGXG motif repeat units lie at residues 146 to 153 (CDTCHGTG), 163 to 170 (CDACGGVG), 185 to 192 (CHKCQGNG), and 199 to 206 (CKKCHGMG).

Belongs to the DnaJ family. As to quaternary structure, homodimer. Zn(2+) serves as cofactor.

The protein resides in the cytoplasm. Functionally, participates actively in the response to hyperosmotic and heat shock by preventing the aggregation of stress-denatured proteins and by disaggregating proteins, also in an autonomous, DnaK-independent fashion. Unfolded proteins bind initially to DnaJ; upon interaction with the DnaJ-bound protein, DnaK hydrolyzes its bound ATP, resulting in the formation of a stable complex. GrpE releases ADP from DnaK; ATP binding to DnaK triggers the release of the substrate protein, thus completing the reaction cycle. Several rounds of ATP-dependent interactions between DnaJ, DnaK and GrpE are required for fully efficient folding. Also involved, together with DnaK and GrpE, in the DNA replication of plasmids through activation of initiation proteins. The polypeptide is Chaperone protein DnaJ (Rickettsia prowazekii (strain Madrid E)).